A 2115-amino-acid chain; its full sequence is MTLHATRGAALLSWVNSLHVADPVEAVLQLQDCSIFIKIIDRIHGTEEGQQILKQPVSERLDFVCSFLQKNRKHPSSPECLVSAQKVLEGSELELAKMTMLLLYHSTMSSKSPRDWEQFEYKIQAELAVILKFVLDHEDGLNLNEDLENFLQKAPVPSTCSSTFPEELSPPSHQAKREIRFLELQKVASSSSGNNFLSGSPASPMGDILQTPQFQMRRLKKQLADERSNRDELELELAENRKLLTEKDAQIAMMQQRIDRLALLNEKQAASPLEPKELEELRDKNESLTMRLHETLKQCQDLKTEKSQMDRKINQLSEENGDLSFKLREFASHLQQLQDALNELTEEHSKATQEWLEKQAQLEKELSAALQDKKCLEEKNEILQGKLSQLEEHLSQLQDNPPQEKGEVLGDVLQLETLKQEAATLAANNTQLQARVEMLETERGQQEAKLLAERGHFEEEKQQLSSLITDLQSSISNLSQAKEELEQASQAHGARLTAQVASLTSELTTLNATIQQQDQELAGLKQQAKEKQAQLAQTLQQQEQASQGLRHQVEQLSSSLKQKEQQLKEVAEKQEATRQDHAQQLATAAEEREASLRERDAALKQLEALEKEKAAKLEILQQQLQVANEARDSAQTSVTQAQREKAELSRKVEELQACVETARQEQHEAQAQVAELELQLRSEQQKATEKERVAQEKDQLQEQLQALKESLKVTKGSLEEEKRRAADALEEQQRCISELKAETRSLVEQHKRERKELEEERAGRKGLEARLQQLGEAHQAETEVLRRELAEAMAAQHTAESECEQLVKEVAAWRERYEDSQQEEAQYGAMFQEQLMTLKEECEKARQELQEAKEKVAGIESHSELQISRQQNELAELHANLARALQQVQEKEVRAQKLADDLSTLQEKMAATSKEVARLETLVRKAGEQQETASRELVKEPARAGDRQPEWLEEQQGRQFCSTQAALQAMEREAEQMGNELERLRAALMESQGQQQEERGQQEREVARLTQERGRAQADLALEKAARAELEMRLQNALNEQRVEFATLQEALAHALTEKEGKDQELAKLRGLEAAQIKELEELRQTVKQLKEQLAKKEKEHASGSGAQSEAAGRTEPTGPKLEALRAEVSKLEQQCQKQQEQADSLERSLEAERASRAERDSALETLQGQLEEKAQELGHSQSALASAQRELAAFRTKVQDHSKAEDEWKAQVARGRQEAERKNSLISSLEEEVSILNRQVLEKEGESKELKRLVMAESEKSQKLEERLRLLQAETASNSARAAERSSALREEVQSLREEAEKQRVASENLRQELTSQAERAEELGQELKAWQEKFFQKEQALSTLQLEHTSTQALVSELLPAKHLCQQLQAEQAAAEKRHREELEQSKQAAGGLRAELLRAQRELGELIPLRQKVAEQERTAQQLRAEKASYAEQLSMLKKAHGLLAEENRGLGERANLGRQFLEVELDQAREKYVQELAAVRADAETRLAEVQREAQSTARELEVMTAKYEGAKVKVLEERQRFQEERQKLTAQVEQLEVFQREQTKQVEELSKKLADSDQASKVQQQKLKAVQAQGGESQQEAQRLQAQLNELQAQLSQKEQAAEHYKLQMEKAKTHYDAKKQQNQELQEQLRSLEQLQKENKELRAEAERLGHELQQAGLKTKEAEQTCRHLTAQVRSLEAQVAHADQQLRDLGKFQVATDALKSREPQAKPQLDLSIDSLDLSCEEGTPLSITSKLPRTQPDGTSVPGEPASPISQRLPPKVESLESLYFTPIPARSQAPLESSLDSLGDVFLDSGRKTRSARRRTTQIINITMTKKLDVEEPDSANSSFYSTRSAPASQASLRATSSTQSLARLGSPDYGNSALLSLPGYRPTTRSSARRSQAGVSSGAPPGRNSFYMGTCQDEPEQLDDWNRIAELQQRNRVCPPHLKTCYPLESRPSLSLGTITDEEMKTGDPQETLRRASMQPIQIAEGTGITTRQQRKRVSLEPHQGPGTPESKKATSCFPRPMTPRDRHEGRKQSTTEAQKKAAPASTKQADRRQSMAFSILNTPKKLGNSLLRRGASKKALSKASPNTRSGTRRSPRIATTTASAATAAAIGATPRAKGKAKH.

The interval 1-212 is head (Globular); the sequence is MTLHATRGAA…SPMGDILQTP (212 aa). The residue at position 162 (S162) is a Phosphoserine. T163 bears the Phosphothreonine mark. S169 and S203 each carry phosphoserine. At T211 the chain carries Phosphothreonine. Positions 213–1699 form a coiled coil; that stretch reads QFQMRRLKKQ…ADQQLRDLGK (1487 aa). At S271 the chain carries Phosphoserine. An N6-acetyllysine modification is found at K379. Phosphoserine is present on residues S388 and S395. Positions 549–560 are enriched in low complexity; that stretch reads LRHQVEQLSSSL. Disordered regions lie at residues 549-593 and 746-766; these read LRHQ…EERE and LVEQHKRERKELEEERAGRKG. Residues 561–581 show a composition bias toward basic and acidic residues; sequence KQKEQQLKEVAEKQEATRQDH. The residue at position 820 (S820) is a Phosphoserine. K891 bears the N6-acetyllysine mark. Basic and acidic residues-rich tracts occupy residues 926 to 950 and 996 to 1013; these read AGEQQETASRELVKEPARAGDRQPE and QEERGQQEREVARLTQER. 2 disordered regions span residues 926 to 958 and 988 to 1013; these read AGEQQETASRELVKEPARAGDRQPEWLEEQQGR and LMESQGQQQEERGQQEREVARLTQER. Residue T1047 is modified to Phosphothreonine; by PLK1. The span at 1090-1102 shows a compositional bias: basic and acidic residues; that stretch reads LKEQLAKKEKEHA. Disordered stretches follow at residues 1090-1225 and 1275-1296; these read LKEQ…RKNS and ETASNSARAAERSSALREEVQS. Low complexity-rich tracts occupy residues 1103-1112 and 1133-1142; these read SGSGAQSEAA and EQQCQKQQEQ. The segment covering 1145 to 1163 has biased composition (basic and acidic residues); that stretch reads SLERSLEAERASRAERDSA. S1187 is modified (phosphoserine). A compositionally biased stretch (basic and acidic residues) spans 1198-1224; sequence KVQDHSKAEDEWKAQVARGRQEAERKN. S1225 carries the phosphoserine modification. Over residues 1283–1296 the composition is skewed to basic and acidic residues; the sequence is AAERSSALREEVQS. N6-acetyllysine is present on K1511. S1601 bears the Phosphoserine mark. A Glycyl lysine isopeptide (Lys-Gly) (interchain with G-Cter in SUMO2) cross-link involves residue K1699. Positions 1699–1876 are membrane-binding domain 1; sequence KFQVATDALK…NSALLSLPGY (178 aa). The tail (Globular) stretch occupies residues 1700–2115; that stretch reads FQVATDALKS…TPRAKGKAKH (416 aa). 3 positions are modified to phosphoserine: S1721, S1724, and S1728. The interval 1734 to 1761 is disordered; the sequence is PLSITSKLPRTQPDGTSVPGEPASPISQ. Polar residues predominate over residues 1735 to 1748; sequence LSITSKLPRTQPDG. Residues 1742–1748 carry the Tankyrase-binding domain motif; sequence PRTQPDG. Phosphoserine occurs at positions 1757 and 1760. K1766 participates in a covalent cross-link: Glycyl lysine isopeptide (Lys-Gly) (interchain with G-Cter in SUMO1); alternate. A Glycyl lysine isopeptide (Lys-Gly) (interchain with G-Cter in SUMO2); alternate cross-link involves residue K1766. Residues S1769 and S1772 each carry the phosphoserine; by PLK1 modification. Position 1774 is a phosphotyrosine (Y1774). A Phosphothreonine modification is found at T1776. Residue S1788 is modified to Phosphoserine. The segment at 1788-1810 is 4.1-binding domain; that stretch reads SSLDSLGDVFLDSGRKTRSARRR. S1789 carries the post-translational modification Phosphoserine; by PLK1. S1792 and S1800 each carry phosphoserine. T1804 carries the post-translational modification Phosphothreonine. K1822 is covalently cross-linked (Glycyl lysine isopeptide (Lys-Gly) (interchain with G-Cter in SUMO2)). Disordered stretches follow at residues 1826-1901 and 1955-2115; these read EEPD…GRNS and EMKT…KAKH. Residues S1830 and S1833 each carry the phosphoserine modification. Residues 1830–1857 are compositionally biased toward polar residues; it reads SANSSFYSTRSAPASQASLRATSSTQSL. S1834 is modified (phosphoserine; by PLK1). Y1836 bears the Phosphotyrosine mark. S1840 is subject to Phosphoserine. S1844 carries the post-translational modification Phosphoserine; alternate. The O-linked (GlcNAc) serine; alternate glycan is linked to S1844. S1862 and S1887 each carry phosphoserine. A compositionally biased stretch (polar residues) spans 1879–1891; that stretch reads TTRSSARRSQAGV. Residues 1882–1985 are tubulin-binding domain; it reads SSARRSQAGV…AEGTGITTRQ (104 aa). The GPSM2-binding domain stretch occupies residues 1892–1926; sequence SSGAPPGRNSFYMGTCQDEPEQLDDWNRIAELQQR. The segment covering 1955 to 1966 has biased composition (basic and acidic residues); sequence EMKTGDPQETLR. The residue at position 1969 (S1969) is a Phosphoserine. Residues 1981–2060 form a membrane-binding domain 2 region; it reads ITTRQQRKRV…SILNTPKKLG (80 aa). A Nuclear localization signal motif is present at residues 1984–1989; that stretch reads RQQRKR. The residue at position 1991 (S1991) is a Phosphoserine. T2000 bears the Phosphothreonine mark. A Phosphoserine modification is found at S2003. T2015 is subject to Phosphothreonine; by CDK1. The segment covering 2015-2032 has biased composition (basic and acidic residues); it reads TPRDRHEGRKQSTTEAQK. A Phosphoserine modification is found at S2047. T2055 is subject to Phosphothreonine; by CDK1. Residues S2062 and S2077 each carry the phosphoserine modification. S2087 bears the Phosphoserine; by CDK1 mark. Low complexity predominate over residues 2089–2108; it reads RIATTTASAATAAAIGATPR. T2106 carries the post-translational modification Phosphothreonine; by CDK1.

In terms of assembly, homodimer. Also forms multiarm oligomers by association of C-terminal tail domains, oligomers may further assemble to form a hexagonal nuclear lattice-like network. Associates with the dynein-dynactin complex; this association promotes the transport and accumulation of NUMA1 at the mitotic spindle poles that is inhibited by the BRISC complex in a PLK1-dependent manner. Part of a spindle orientation complex at least composed of GNAI1, GPSM2 and NUMA1. Interacts (via C-terminus) with microtubules (MTs); this interaction is direct and promotes both MT bundle formation and stability in a dynein-dynactin complex- and CDK1-independent manner. Interacts with EPB41 and EPB41L2; these interactions are negatively regulated by CDK1 during metaphase and are important for anaphase-specific localization of NUMA1 in symmetrically dividing cells. Interacts (via C-terminus) with GPSM2 (via TPR repeats); this interaction is direct, prevented by competitive binding of INSC, is inhibited in a PLK1-dependent manner, blocks the association of NUMA1 with MTs and inhibits NUMA1-induced MT bundle formation, prevents the association of NUMA1 with SPAG5, induces mitotic spindle pole localization of GPSM2, both metaphase cell cortex localization of NUMA1 and mitotic spindle organization. Does not interact with GPSM2 during anaphase. Interacts (via C-terminus) with the nuclear importin alpha/importin beta receptor; this interaction is inhibited by RanGTP. Interacts (via C-terminus) with KPNB1; this interaction is inhibited by RanGTP and the BRISC complex. Interacts with ABRAXAS2 and the BRISC complex; these interactions regulate mitotic spindle assembly. Interacts (via N-terminal end of the coiled-coil domain) with RAE1; this interaction promotes mitotic spindle formation. Interacts (via C-terminus) with SPAG5 (via C-terminus); this interaction promotes the recruitment of SPAG5 to the MTs at spindle poles in a dynein-dynactin-dependent manner and regulates mitotic spindle organization and proper chromosome alignment during mitosis. Interacts with TNKS; this interaction occurs at the onset of mitosis. Interacts with TNKS2. Interacts with tubulin. Interacts with KHDC3L (via C-terminus). Phosphorylation and dephosphorylation on Thr-2055 regulates the extent of cortical NUMA1 and the dynein-dynactin complex localization during mitotic metaphase and anaphase. In metaphase, phosphorylation on Thr-2055 occurs in a kinase CDK1-dependent manner; this phosphorylation maintains low levels of cortical dynein-dynactin complex at metaphase, and hence proper spindle positioning. In anaphase, dephosphorylated on Thr-2055 by phosphatase PPP2CA; this dephosphorylation stimulates its membrane association and with the dynein-dynactin complex its enrichment at the cell cortex, and hence robust spindle elongation. Probably also phosphorylated on Thr-2015 and Ser-2087 by CDK1; these phosphorylations may regulate its cell cortex recruitment during metaphase and anaphase. Phosphorylated on Thr-1047, Ser-1769, Ser-1772, Ser-1789 and Ser-1834 by PLK1; these phosphorylations induce cortical dynein-dynactin complex dissociation from the NUMA1-GPSM2 complex and negatively regulates cortical dynein-dynactin complex localization. Post-translationally, ADP-ribosylated by TNKS at the onset of mitosis; ADP-ribosylation is not required for its localization to spindle poles. In terms of processing, O-glycosylated during cytokinesis at sites identical or close to phosphorylation sites, this interferes with the phosphorylation status. Ubiquitinated with 'Lys-63'-linked polyubiquitin chains. Deubiquitination by the BRISC complex is important for the incorporation of NUMA1 into mitotic spindle poles and normal spindle pole function, probably by modulating interactions between NUMA1, dynein-dynactin complex and importin-beta.

It localises to the nucleus. It is found in the nucleoplasm. The protein resides in the nucleus matrix. The protein localises to the chromosome. Its subcellular location is the cytoplasm. It localises to the cytoskeleton. It is found in the microtubule organizing center. The protein resides in the centrosome. The protein localises to the spindle pole. Its subcellular location is the cell cortex. It localises to the cell membrane. It is found in the lateral cell membrane. The protein resides in the cytosol. In terms of biological role, microtubule (MT)-binding protein that plays a role in the formation and maintenance of the spindle poles and the alignement and the segregation of chromosomes during mitotic cell division. Functions to tether the minus ends of MTs at the spindle poles, which is critical for the establishment and maintenance of the spindle poles. Plays a role in the establishment of the mitotic spindle orientation during metaphase and elongation during anaphase in a dynein-dynactin-dependent manner. In metaphase, part of a ternary complex composed of GPSM2 and G(i) alpha proteins, that regulates the recruitment and anchorage of the dynein-dynactin complex in the mitotic cell cortex regions situated above the two spindle poles, and hence regulates the correct oritentation of the mitotic spindle. During anaphase, mediates the recruitment and accumulation of the dynein-dynactin complex at the cell membrane of the polar cortical region through direct association with phosphatidylinositol 4,5-bisphosphate (PI(4,5)P2), and hence participates in the regulation of the spindle elongation and chromosome segregation. Also binds to other polyanionic phosphoinositides, such as phosphatidylinositol 3-phosphate (PIP), lysophosphatidic acid (LPA) and phosphatidylinositol triphosphate (PIP3), in vitro. Also required for proper orientation of the mitotic spindle during asymmetric cell divisions. Plays a role in mitotic MT aster assembly. Involved in anastral spindle assembly. Positively regulates TNKS protein localization to spindle poles in mitosis. Highly abundant component of the nuclear matrix where it may serve a non-mitotic structural role, occupies the majority of the nuclear volume. Required for epidermal differentiation and hair follicle morphogenesis. This is Nuclear mitotic apparatus protein 1 from Homo sapiens (Human).